A 456-amino-acid polypeptide reads, in one-letter code: Cell cycle checkpoint control protein Rad9 (456 aa).

A Nuclear localization signal motif is present at residues 300-302 (KRK).

This sequence belongs to the rad9 family. Component of the 9-1-1 checkpoint clamp complex consisting of Rad9 isoform A, Rad1 and Hus1-like; the interaction with Hus1-like is direct. Does not interact directly with Rad1; this interaction is probably mediated by Hus1-like. This complex probably also forms with Rad9 isoform B, however 9-1-1 complex containing Rad9 isoform A localizes to the nuclear periphery. Interacts with Brca2. Expressed in ovary.

Its subcellular location is the nucleus envelope. It is found in the nucleus. Component of the Rad9-Rad1-Hus1 (9-1-1) checkpoint clamp complex. Its function is as follows. Targets the 9-1-1 complex to the nuclear periphery. Targeting to the nuclear periphery is disrupted in the presence of persistent double stranded break DNA damage, possibly as a function of the meiotic checkpoint. The sequence is that of Cell cycle checkpoint control protein Rad9 from Drosophila melanogaster (Fruit fly).